A 74-amino-acid polypeptide reads, in one-letter code: Protein SOM1, mitochondrial (74 aa).

As to quaternary structure, component of the mitochondrial inner membrane peptidase (IMP) complex which at least consists of IMP1, IMP2 and SOM1.

The protein resides in the mitochondrion inner membrane. In terms of biological role, non-catalytic component of the mitochondrial inner membrane peptidase (IMP) complex. IMP catalyzes the removal of signal peptides required for the targeting of proteins from the mitochondrial matrix, across the inner membrane, into the inter-membrane space. SOM1 facilitates cleavage of a subset of IMP substrates. This is Protein SOM1, mitochondrial (SOM1) from Saccharomyces cerevisiae (strain ATCC 204508 / S288c) (Baker's yeast).